Reading from the N-terminus, the 711-residue chain is Polyribonucleotide nucleotidyltransferase (711 aa).

The Mg(2+) site is built by Asp-486 and Asp-492. One can recognise a KH domain in the interval 553 to 612 (PRIHTIKISTDKIKDVIGKGGSVIRALTEETGTTIEIEDDGTVKIAATDGEKAKYAIRRI). Positions 622–690 (GRIYNGKVTR…RQGRVRLSIK (69 aa)) constitute an S1 motif domain. The segment at 690-711 (KEATEQSQPAAAPEAPASEQAE) is disordered. A compositionally biased stretch (low complexity) spans 694–711 (EQSQPAAAPEAPASEQAE).

This sequence belongs to the polyribonucleotide nucleotidyltransferase family. Component of the RNA degradosome, which is a multiprotein complex involved in RNA processing and mRNA degradation. The cofactor is Mg(2+).

It is found in the cytoplasm. The catalysed reaction is RNA(n+1) + phosphate = RNA(n) + a ribonucleoside 5'-diphosphate. Involved in mRNA degradation. Catalyzes the phosphorolysis of single-stranded polyribonucleotides processively in the 3'- to 5'-direction. In Salmonella choleraesuis (strain SC-B67), this protein is Polyribonucleotide nucleotidyltransferase.